Here is a 176-residue protein sequence, read N- to C-terminus: 3-hydroxydecanoyl-[acyl-carrier-protein] dehydratase (176 aa).

The active site involves His-75.

This sequence belongs to the thioester dehydratase family. FabA subfamily. Homodimer.

It localises to the cytoplasm. It catalyses the reaction a (3R)-hydroxyacyl-[ACP] = a (2E)-enoyl-[ACP] + H2O. The enzyme catalyses (3R)-hydroxydecanoyl-[ACP] = (2E)-decenoyl-[ACP] + H2O. The catalysed reaction is (2E)-decenoyl-[ACP] = (3Z)-decenoyl-[ACP]. It participates in lipid metabolism; fatty acid biosynthesis. In terms of biological role, necessary for the introduction of cis unsaturation into fatty acids. Catalyzes the dehydration of (3R)-3-hydroxydecanoyl-ACP to E-(2)-decenoyl-ACP and then its isomerization to Z-(3)-decenoyl-ACP. Can catalyze the dehydratase reaction for beta-hydroxyacyl-ACPs with saturated chain lengths up to 16:0, being most active on intermediate chain length. This is 3-hydroxydecanoyl-[acyl-carrier-protein] dehydratase from Glaesserella parasuis serovar 5 (strain SH0165) (Haemophilus parasuis).